Reading from the N-terminus, the 172-residue chain is C-phycocyanin beta chain (172 aa).

Asn-72 is modified (N4-methylasparagine). (2R,3E)-phycocyanobilin contacts are provided by Cys-82 and Cys-153.

Belongs to the phycobiliprotein family. In terms of assembly, heterodimer of an alpha and a beta subunit, which further assembles into trimers and the trimers into hexamers. The basic functional unit of phycobiliproteins is a ring-shaped hexamer formed from two back-to-back trimers contacting via the alpha chain subunits. The trimers are composed of alpha/beta subunit heterodimers arranged around a three-fold axis of symmetry. The phycoerythrins also contain a gamma subunit which is located in the center of the hexamer. Post-translationally, contains two covalently linked bilin chromophores.

It localises to the plastid. The protein localises to the chloroplast thylakoid membrane. Its function is as follows. Light-harvesting photosynthetic bile pigment-protein from the phycobiliprotein complex (phycobilisome, PBS). Phycocyanin is the major phycobiliprotein in the PBS rod. The sequence is that of C-phycocyanin beta chain (cpcB) from Pyropia yezoensis (Susabi-nori).